A 555-amino-acid polypeptide reads, in one-letter code: MAMELFRVCLVVVTAIINHPLLFPRENATIPENEEEIIRKMQEHQEKLRLEQLRLEEEVSRLEAEKEALRQVEEEQQQLEAHTAWDLWTTLCMVLFLIIEVLRQNHQEGTFPECLGGDEDELSGLGGTLLQGLPLPNRATLDHFYEHCIRSTTGDATRTQEFVEGFVDDLLEALRSTYNGKTDMELEDFIGVGSMYENWQVERPLRCHLFIPFIPPEPYSFHPEFWCSSLSTPLERQGYGQIKVTLADGNPLGCVCGKAKLEEDMLCLLYGKNRGAWPSSAGCGEMEGLLCSRESSYLDVMQVMKWFQMALTRAWHRIAHKYEFDLAFGELDTPGSLKIKFRSGKSMPFILTPVIQCNDSDLYFILQLPKEPCGGGPASSAHWLLSFAVYEREFLRMTGKALPEGACHLSCLQIASFLLSKQTRLTGPSGLSDYHLKTALLHLLLSRQASDWKASKLDVRLQDLFCFLERSLLEKKLYHFFMGNHKVPEALGLPEVVRRAEPLNLFRPFVLQRTLYRNTVDSFYEMLKNAPALISEYSLHVPSVRASPPPKAVVS.

A signal peptide spans 1–15; it reads MAMELFRVCLVVVTA. Topologically, residues 16–81 are extracellular; it reads IINHPLLFPR…VEEEQQQLEA (66 aa). A glycan (N-linked (GlcNAc...) asparagine) is linked at asparagine 27. Residues 32-84 adopt a coiled-coil conformation; that stretch reads ENEEEIIRKMQEHQEKLRLEQLRLEEEVSRLEAEKEALRQVEEEQQQLEAHTA. The chain crosses the membrane as a helical span at residues 82 to 102; that stretch reads HTAWDLWTTLCMVLFLIIEVL. The Cytoplasmic portion of the chain corresponds to 103-555; that stretch reads RQNHQEGTFP…ASPPPKAVVS (453 aa).

This sequence belongs to the ITPRIP family. In terms of assembly, interacts with ITPR.

The protein resides in the cell membrane. The protein localises to the nucleus outer membrane. Its function is as follows. Enhances Ca(2+)-mediated inhibition of inositol 1,4,5-triphosphate receptor (ITPR) Ca(2+) release. The polypeptide is Inositol 1,4,5-trisphosphate receptor-interacting protein (Itprip) (Mus musculus (Mouse)).